We begin with the raw amino-acid sequence, 197 residues long: MSLKNSLVIYGGSFNPPHNGHIIIAQLVREMFRFADFHVVTSSTPPHKKVDVSFKERFFLTKKAFEKVEGITVSDIEHRLGGVSYAINTIEYYEKKYSHIFFLVGEDALYSIEKWYRYEDILKKAHMLVYPRFKDELVYKKVERVLESLSNSIYILKLPLIQISSTVVRERAIKGLSLYGFVPQHIISYVEEIYGNR.

It belongs to the NadD family.

It carries out the reaction nicotinate beta-D-ribonucleotide + ATP + H(+) = deamido-NAD(+) + diphosphate. It functions in the pathway cofactor biosynthesis; NAD(+) biosynthesis; deamido-NAD(+) from nicotinate D-ribonucleotide: step 1/1. Its function is as follows. Catalyzes the reversible adenylation of nicotinate mononucleotide (NaMN) to nicotinic acid adenine dinucleotide (NaAD). This chain is Probable nicotinate-nucleotide adenylyltransferase, found in Thermosipho melanesiensis (strain DSM 12029 / CIP 104789 / BI429).